A 145-amino-acid chain; its full sequence is D-aminoacyl-tRNA deacylase (145 aa).

The Gly-cisPro motif, important for rejection of L-amino acids signature appears at 137–138 (GP).

Belongs to the DTD family. In terms of assembly, homodimer.

It localises to the cytoplasm. It carries out the reaction glycyl-tRNA(Ala) + H2O = tRNA(Ala) + glycine + H(+). The enzyme catalyses a D-aminoacyl-tRNA + H2O = a tRNA + a D-alpha-amino acid + H(+). An aminoacyl-tRNA editing enzyme that deacylates mischarged D-aminoacyl-tRNAs. Also deacylates mischarged glycyl-tRNA(Ala), protecting cells against glycine mischarging by AlaRS. Acts via tRNA-based rather than protein-based catalysis; rejects L-amino acids rather than detecting D-amino acids in the active site. By recycling D-aminoacyl-tRNA to D-amino acids and free tRNA molecules, this enzyme counteracts the toxicity associated with the formation of D-aminoacyl-tRNA entities in vivo and helps enforce protein L-homochirality. The protein is D-aminoacyl-tRNA deacylase of Citrobacter koseri (strain ATCC BAA-895 / CDC 4225-83 / SGSC4696).